The sequence spans 255 residues: Flap endonuclease Xni (255 aa).

Residue D105 coordinates Mg(2+). The region spanning 162-253 (EHSQFIDYLA…NLSQFRLPNP (92 aa)) is the 5'-3' exonuclease domain. K(+) contacts are provided by L172, A173, P181, V183, and I186. Residues 185-190 (GIGPKS) form an interaction with DNA region.

The protein belongs to the Xni family. Mg(2+) is required as a cofactor. K(+) serves as cofactor.

In terms of biological role, has flap endonuclease activity. During DNA replication, flap endonucleases cleave the 5'-overhanging flap structure that is generated by displacement synthesis when DNA polymerase encounters the 5'-end of a downstream Okazaki fragment. The chain is Flap endonuclease Xni from Shewanella sediminis (strain HAW-EB3).